The following is a 260-amino-acid chain: Hydroxyethylthiazole kinase (260 aa).

Methionine 36 contributes to the substrate binding site. Residues arginine 112 and threonine 157 each contribute to the ATP site. Residue glycine 184 participates in substrate binding.

It belongs to the Thz kinase family. It depends on Mg(2+) as a cofactor.

The enzyme catalyses 5-(2-hydroxyethyl)-4-methylthiazole + ATP = 4-methyl-5-(2-phosphooxyethyl)-thiazole + ADP + H(+). It participates in cofactor biosynthesis; thiamine diphosphate biosynthesis; 4-methyl-5-(2-phosphoethyl)-thiazole from 5-(2-hydroxyethyl)-4-methylthiazole: step 1/1. Functionally, catalyzes the phosphorylation of the hydroxyl group of 4-methyl-5-beta-hydroxyethylthiazole (THZ). The sequence is that of Hydroxyethylthiazole kinase from Shouchella clausii (strain KSM-K16) (Alkalihalobacillus clausii).